The chain runs to 1130 residues: Serine/threonine-protein kinase LATS1 (1130 aa).

The span at 1-11 (MKRSEKPEGYR) shows a compositional bias: basic and acidic residues. The disordered stretch occupies residues 1–71 (MKRSEKPEGY…PRQVRNPPKF (71 aa)). The span at 19 to 30 (PASNYTVSSRQM) shows a compositional bias: polar residues. Positions 46-64 (DAAKAEHNMSKMSTEDPRQ) are enriched in basic and acidic residues. Residues 100–141 (EVNPQMLQDLQAAGFDEDMVIQALQKTNNRSIEAAIEFISKM) form the UBA domain. The interval 149 to 276 (EQMAAAAARP…SWEPNSQTKR (128 aa)) is disordered. A compositionally biased stretch (polar residues) spans 167–179 (NVQQSVNRKQSWK). Residues 235 to 268 (NPPPPPQVRSVTPPPPPRGQTPPPRGTTPPPPSW) are compositionally biased toward pro residues. Position 246 is a phosphothreonine (threonine 246). Serine 278 is modified (phosphoserine). Disordered stretches follow at residues 294–321 (GAWQ…RGIS), 365–405 (AGTV…NGSI), 432–484 (NWPQ…PSAT), and 515–631 (THPS…ESRI). The segment covering 300–312 (YPPPPLNTSPMNP) has biased composition (pro residues). The short motif at 373–376 (PPPY) is the PPxY motif 1 element. Over residues 381–405 (ANGQSPSALQTGGSAAPSSYTNGSI) the composition is skewed to polar residues. The segment covering 434-447 (PQSSSAPAQSSPSS) has biased composition (low complexity). The segment covering 454–482 (WQPNIPVRSNSFNNPLGNRASHSANSQPS) has biased composition (polar residues). At serine 464 the chain carries Phosphoserine; by NUAK1 and NUAK2. Residues 526 to 655 (TVQPSPFPEG…HVENVLKSHQ (130 aa)) form an interaction with YAP1 region. Residues 556–559 (PPPY) carry the PPxY motif 2 motif. Basic and acidic residues predominate over residues 579–609 (PSKEDQPSLPKEDESEKSYENVDSGDKEKKQ). Serine 613 bears the Phosphoserine mark. Over residues 621–630 (KKDEERRESR) the composition is skewed to basic and acidic residues. Serine 674 is subject to Phosphoserine. Residues 705 to 1010 (FVKIKTLGIG…ADEIKAHPFF (306 aa)) enclose the Protein kinase domain. Residues 711–719 (LGIGAFGEV) and lysine 734 each bind ATP. Catalysis depends on aspartate 828, which acts as the Proton acceptor. Residue serine 909 is modified to Phosphoserine; by STK3/MST2. Positions 1011-1090 (KTIDFSSDLR…RRFFDDNGYP (80 aa)) constitute an AGC-kinase C-terminal domain. Threonine 1079 carries the phosphothreonine; by STK3/MST2 modification. The tract at residues 1104 to 1130 (SQGSEQQSDEDDQNTGSEIKNRDLVYV) is disordered.

Belongs to the protein kinase superfamily. AGC Ser/Thr protein kinase family. In terms of assembly, complexes with CDK1 in early mitosis. LATS1-associated CDK1 has no mitotic cyclin partner and no apparent kinase activity. Binds phosphorylated ZYX, locating this protein to the mitotic spindle and suggesting a role for actin regulatory proteins during mitosis. Binds to and colocalizes with LIMK1 at the actomyosin contractile ring during cytokinesis. Interacts (via PPxY motif 2) with YAP1 (via WW domains). Interacts with MOB1A and MOB1B. Interacts with LIMD1, WTIP and AJUBA. Interacts with ESR1, DCAF1 and DCAF13; probably recruits DCAF1 and DCAF13 to ESR1 to promote ESR1 ubiquitination and ubiquitin-mediated proteasomal degradation. Interacts with STK3/MST2; this interaction is inhibited in the presence of DLG5. Interacts with SCRIB in the presence of DLG5. Interacts with WWTR1/TAZ. Interacts with WWC1, WWC2 and WWC3 (via their WW domains). The cofactor is Mg(2+). In terms of processing, autophosphorylated and phosphorylated during M-phase of the cell cycle. Phosphorylated by STK3/MST2 at Ser-909 and Thr-1079, which results in its activation. Phosphorylated by MAP4Ks; in parallel to STK3/MST2 and resulting to its activation. Phosphorylation at Ser-464 by NUAK1 and NUAK2 leads to decreased protein level and is required to regulate cellular senescence and cellular ploidy. Expressed in all adult tissues examined except for lung and kidney.

The protein resides in the cytoplasm. It localises to the cytoskeleton. Its subcellular location is the microtubule organizing center. The protein localises to the centrosome. It is found in the spindle. The protein resides in the midbody. It localises to the spindle pole body. It carries out the reaction L-seryl-[protein] + ATP = O-phospho-L-seryl-[protein] + ADP + H(+). It catalyses the reaction L-threonyl-[protein] + ATP = O-phospho-L-threonyl-[protein] + ADP + H(+). Its function is as follows. Negative regulator of YAP1 in the Hippo signaling pathway that plays a pivotal role in organ size control and tumor suppression by restricting proliferation and promoting apoptosis. The core of this pathway is composed of a kinase cascade wherein STK3/MST2 and STK4/MST1, in complex with its regulatory protein SAV1, phosphorylates and activates LATS1/2 in complex with its regulatory protein MOB1, which in turn phosphorylates and inactivates YAP1 oncoprotein and WWTR1/TAZ. Phosphorylation of YAP1 by LATS1 inhibits its translocation into the nucleus to regulate cellular genes important for cell proliferation, cell death, and cell migration. Acts as a tumor suppressor which plays a critical role in maintenance of ploidy through its actions in both mitotic progression and the G1 tetraploidy checkpoint. Negatively regulates G2/M transition by down-regulating CDK1 kinase activity. Involved in the control of p53 expression. Affects cytokinesis by regulating actin polymerization through negative modulation of LIMK1. May also play a role in endocrine function. Plays a role in mammary gland epithelial cell differentiation, both through the Hippo signaling pathway and the intracellular estrogen receptor signaling pathway by promoting the degradation of ESR1. Acts as an activator of the NLRP3 inflammasome by mediating phosphorylation of 'Ser-265' of NLRP3 following NLRP3 palmitoylation, promoting NLRP3 activation by NEK7. The chain is Serine/threonine-protein kinase LATS1 from Homo sapiens (Human).